Reading from the N-terminus, the 180-residue chain is Bifunctional protein PyrR (180 aa).

The short motif at 101–113 (VILVDDVLYTGRT) is the PRPP-binding element.

It belongs to the purine/pyrimidine phosphoribosyltransferase family. PyrR subfamily. As to quaternary structure, homodimer and homohexamer; in equilibrium.

The catalysed reaction is UMP + diphosphate = 5-phospho-alpha-D-ribose 1-diphosphate + uracil. Functionally, regulates transcriptional attenuation of the pyrimidine nucleotide (pyr) operon by binding in a uridine-dependent manner to specific sites on pyr mRNA. This disrupts an antiterminator hairpin in the RNA and favors formation of a downstream transcription terminator, leading to a reduced expression of downstream genes. Its function is as follows. Also displays a weak uracil phosphoribosyltransferase activity which is not physiologically significant. This Bacillus cytotoxicus (strain DSM 22905 / CIP 110041 / 391-98 / NVH 391-98) protein is Bifunctional protein PyrR.